Consider the following 626-residue polypeptide: Chaperone protein HtpG (626 aa).

The a; substrate-binding stretch occupies residues 1-339 (MSQNQETRGF…SNDLPLNVSR (339 aa)). The interval 340–555 (EILQDNKITA…NDQMTTQMAK (216 aa)) is b. Positions 556–626 (LFAAAGQPVP…FIKRINKLLG (71 aa)) are c.

This sequence belongs to the heat shock protein 90 family. As to quaternary structure, homodimer.

Its subcellular location is the cytoplasm. Functionally, molecular chaperone. Has ATPase activity. This chain is Chaperone protein HtpG, found in Haemophilus influenzae (strain PittGG).